We begin with the raw amino-acid sequence, 517 residues long: DNA primase DnaG (517 aa).

Positions 171–257 (DAIIILEGRA…CVEDLVQKEV (87 aa)) constitute a Toprim domain. Positions 177, 219, and 221 each coordinate Mg(2+).

The protein belongs to the archaeal DnaG primase family. As to quaternary structure, forms a ternary complex with MCM helicase and DNA. Component of the archaeal exosome complex. Requires Mg(2+) as cofactor.

It catalyses the reaction ssDNA + n NTP = ssDNA/pppN(pN)n-1 hybrid + (n-1) diphosphate.. Its function is as follows. RNA polymerase that catalyzes the synthesis of short RNA molecules used as primers for DNA polymerase during DNA replication. Also part of the exosome, which is a complex involved in RNA degradation. Acts as a poly(A)-binding protein that enhances the interaction between heteromeric, adenine-rich transcripts and the exosome. In Methanosarcina barkeri (strain Fusaro / DSM 804), this protein is DNA primase DnaG.